Reading from the N-terminus, the 132-residue chain is D-ribose pyranase (132 aa).

H20 acts as the Proton donor in catalysis. Substrate contacts are provided by residues D28, H99, and Y121–N123.

The protein belongs to the RbsD / FucU family. RbsD subfamily. In terms of assembly, homodecamer.

It is found in the cytoplasm. The catalysed reaction is beta-D-ribopyranose = beta-D-ribofuranose. It participates in carbohydrate metabolism; D-ribose degradation; D-ribose 5-phosphate from beta-D-ribopyranose: step 1/2. Functionally, catalyzes the interconversion of beta-pyran and beta-furan forms of D-ribose. In Streptococcus agalactiae serotype Ia (strain ATCC 27591 / A909 / CDC SS700), this protein is D-ribose pyranase.